Consider the following 482-residue polypeptide: Interferon-induced protein with tetratricopeptide repeats 5 (482 aa).

TPR repeat units lie at residues 51–84, 94–127, 138–173, 181–214, 249–282, 338–371, 376–410, and 435–468; these read LALY…IQQE, LVTW…CKKL, PETD…EPDN, AITV…NPDN, PYVL…TPTS, AFAY…ENIT, HQIH…KDRS, and VQSL…DPEN. The interaction with the 5'-triphosphate group of PPP-RNA stretch occupies residues 254-260; sequence YAAKFYR.

It belongs to the IFIT family. As to quaternary structure, monomer. Interacts with MAP3K7 and the components of the IKK core complex CHUK, IKBKB and IKBKG; the interaction synergizes the recruitment of IKK to MAP3K7 and enhances IKK phosphorylation.

The protein localises to the cell projection. The protein resides in the ruffle membrane. Functionally, interferon-induced RNA-binding protein involved in the human innate immune response. Has a broad and adaptable RNA structure recognition important for RNA recognition specificity in antiviral defense. Binds precursor and processed tRNAs as well as poly-U-tailed tRNA fragments. Specifically binds single-stranded RNA bearing a 5'-triphosphate group (PPP-RNA), thereby acting as a sensor of viral single-stranded RNAs. Single-stranded PPP-RNAs, which lack 2'-O-methylation of the 5' cap and bear a 5'-triphosphate group instead, are specific from viruses, providing a molecular signature to distinguish between self and non-self mRNAs by the host during viral infection. Directly binds PPP-RNA in a non-sequence-specific manner. Also recognizes and selectively binds AT-rich dsDNA. Additionally, as a mediator in innate immunity, positively regulates IKK-NFKB signaling by sinergizing the recruitment of IKK to MAP3K7. This is Interferon-induced protein with tetratricopeptide repeats 5 (IFIT5) from Homo sapiens (Human).